A 90-amino-acid chain; its full sequence is Envelope protein US9 homolog (90 aa).

Residues 1–63 (MEPLRLADAE…IRRRRRQTRA (63 aa)) are Intravirion-facing. Residues 12-13 (LL) carry the Di-leucine internalization motif motif. The interval 29-38 (EAYYTESDDE) is acidic. The helical; Signal-anchor for type II membrane protein transmembrane segment at 64–84 (AGFVAAFVLVALISGGLGALM) threads the bilayer. The Virion surface segment spans residues 85–90 (CWLAYR).

It belongs to the alphaherpesvirinae envelope protein US9 family. Phosphorylated on serines within the acidic cluster. Phosphorylation determines whether endocytosed viral US9 traffics to the trans-Golgi network or recycles to the cell membrane.

Its subcellular location is the virion membrane. It localises to the host Golgi apparatus membrane. The protein resides in the host smooth endoplasmic reticulum membrane. The protein localises to the host cell membrane. In terms of biological role, essential for the anterograde spread of the infection throughout the host nervous system. Together with the gE/gI heterodimer, US9 is involved in the sorting and transport of viral structural components toward axon tips. This chain is Envelope protein US9 homolog, found in Cercopithecine herpesvirus 1 (CeHV-1).